The following is a 327-amino-acid chain: Tetraacyldisaccharide 4'-kinase (327 aa).

52–59 (TAGGAGKT) contributes to the ATP binding site.

This sequence belongs to the LpxK family.

It carries out the reaction a lipid A disaccharide + ATP = a lipid IVA + ADP + H(+). Its pathway is glycolipid biosynthesis; lipid IV(A) biosynthesis; lipid IV(A) from (3R)-3-hydroxytetradecanoyl-[acyl-carrier-protein] and UDP-N-acetyl-alpha-D-glucosamine: step 6/6. Functionally, transfers the gamma-phosphate of ATP to the 4'-position of a tetraacyldisaccharide 1-phosphate intermediate (termed DS-1-P) to form tetraacyldisaccharide 1,4'-bis-phosphate (lipid IVA). This chain is Tetraacyldisaccharide 4'-kinase, found in Gluconacetobacter diazotrophicus (strain ATCC 49037 / DSM 5601 / CCUG 37298 / CIP 103539 / LMG 7603 / PAl5).